Reading from the N-terminus, the 420-residue chain is Exodeoxyribonuclease 7 large subunit (420 aa).

This sequence belongs to the XseA family. As to quaternary structure, heterooligomer composed of large and small subunits.

The protein localises to the cytoplasm. The enzyme catalyses Exonucleolytic cleavage in either 5'- to 3'- or 3'- to 5'-direction to yield nucleoside 5'-phosphates.. Functionally, bidirectionally degrades single-stranded DNA into large acid-insoluble oligonucleotides, which are then degraded further into small acid-soluble oligonucleotides. The chain is Exodeoxyribonuclease 7 large subunit from Helicobacter pylori (strain J99 / ATCC 700824) (Campylobacter pylori J99).